Here is a 554-residue protein sequence, read N- to C-terminus: Solute carrier family 22 member 1 (554 aa).

Residues 1–24 (MPSVDDVLEQVGEFGWFQKQAFLN) are Cytoplasmic-facing. The chain crosses the membrane as a helical span at residues 25–45 (LCLTSVAFAPIYVGIVFLGFT). Topologically, residues 46–234 (PDHRCRSPGV…EFVGLGYRKT (189 aa)) are extracellular. Residue N71 is glycosylated (N-linked (GlcNAc...) asparagine). A helical membrane pass occupies residues 235–255 (VAILYQTAFSVGLVLLSGLAY). Over 256-261 (AVPHWR) the chain is Cytoplasmic. A helical transmembrane segment spans residues 262–282 (SLQLAVSLPIFLLLLCYWFVP). Residues 282 to 286 (PESPR) carry the Proline-rich sequence motif. The Extracellular segment spans residues 283-347 (ESPRWLLSQK…FRTQNLRKYT (65 aa)). S333 is subject to Phosphoserine. A helical membrane pass occupies residues 348–368 (FILMYLWFTSSVLYQGLIMHV). At 369 to 376 (GATGGSLY) the chain is on the cytoplasmic side. A helical transmembrane segment spans residues 377-397 (LDFLYSALVEFPAAFVILLII). Residues 398–402 (DRFGR) lie on the Extracellular side of the membrane. The chain crosses the membrane as a helical span at residues 403–423 (LYLLAGSNLLAGAACFFMIFI). Residues 424–431 (SHDLHWLS) lie on the Cytoplasmic side of the membrane. A helical membrane pass occupies residues 432–452 (IVAACIGRMGITIVFQMVCLV). Residues 453–464 (SAELYPTFIRNL) are Extracellular-facing. A helical transmembrane segment spans residues 465-485 (GVMVCSSLCDLGGVVAPFLVF). Topologically, residues 486 to 492 (RLTEVWR) are cytoplasmic. A helical membrane pass occupies residues 493-513 (GLPLVLFAALGLVAGGMSLLL). The Extracellular portion of the chain corresponds to 514-554 (PETKGVALPETIEEVERLGRKAKPRDNMIYLQVKMPEPAGL).

The protein belongs to the major facilitator (TC 2.A.1) superfamily. Organic cation transporter (TC 2.A.1.19) family. Phosphorylated.

It is found in the basolateral cell membrane. The protein localises to the apical cell membrane. Its subcellular location is the lateral cell membrane. The protein resides in the basal cell membrane. It localises to the cell membrane. The enzyme catalyses 1-methylnicotinamide(out) = 1-methylnicotinamide(in). The catalysed reaction is dopamine(out) = dopamine(in). It carries out the reaction serotonin(out) = serotonin(in). It catalyses the reaction (R)-adrenaline(out) = (R)-adrenaline(in). The enzyme catalyses (R)-noradrenaline(out) = (R)-noradrenaline(in). The catalysed reaction is histamine(out) = histamine(in). It carries out the reaction guanidine(out) = guanidine(in). It catalyses the reaction choline(out) = choline(in). The enzyme catalyses acetylcholine(in) = acetylcholine(out). The catalysed reaction is thiamine(in) = thiamine(out). It carries out the reaction spermidine(in) = spermidine(out). It catalyses the reaction agmatine(out) = agmatine(in). The enzyme catalyses putrescine(out) = putrescine(in). The catalysed reaction is (R)-carnitine(in) = (R)-carnitine(out). It carries out the reaction O-isobutanoyl-(R)-carnitine(in) = O-isobutanoyl-(R)-carnitine(out). It catalyses the reaction O-acetyl-(R)-carnitine(in) = O-acetyl-(R)-carnitine(out). The enzyme catalyses O-3-hydroxybutanoyl-(R)-carnitine(in) = O-3-hydroxybutanoyl-(R)-carnitine(out). The catalysed reaction is O-propanoyl-(R)-carnitine(in) = O-propanoyl-(R)-carnitine(out). It carries out the reaction O-butanoyl-(R)-carnitine(in) = O-butanoyl-(R)-carnitine(out). It catalyses the reaction O-2-methylbutanoyl-(R)-carnitine(in) = O-2-methylbutanoyl-(R)-carnitine(out). The enzyme catalyses O-3-methylbutanoyl-(R)-carnitine(in) = O-3-methylbutanoyl-(R)-carnitine(out). The catalysed reaction is O-hexanoyl-(R)-carnitine(in) = O-hexanoyl-(R)-carnitine(out). It carries out the reaction L-histidyl-L-proline diketopiperazine(in) = L-histidyl-L-proline diketopiperazine(out). It catalyses the reaction (R)-salsolinol(in) = (R)-salsolinol(out). The enzyme catalyses prostaglandin F2alpha(out) = prostaglandin F2alpha(in). The catalysed reaction is prostaglandin E2(out) = prostaglandin E2(in). With respect to regulation, phosphorylation of the transporter leads to changes in its substrate affinity, resulting in a regulation of the transport activity. In contrast with rat ortholog, ASP uptake is inhibited by protein kinase A (PKA) and C (PKC) activation. ASP uptake is also endogenously activated by calmodulin, the calmodulin-dependent kinase II and LCK tyrosine kinase. Inhibited by cGMP, most likely through a cGMP-binding protein that interacts with OCT1. In terms of biological role, electrogenic voltage-dependent transporter that mediates the transport of a variety of organic cations such as endogenous bioactive amines, cationic drugs and xenobiotics. Functions as a pH- and Na(+)-independent, bidirectional transporter. Cation cellular uptake or release is driven by the electrochemical potential (i.e. membrane potential and concentration gradient) and substrate selectivity. Hydrophobicity is a major requirement for recognition in polyvalent substrates and inhibitors. Primarily expressed in the basolateral membrane of hepatocytes and proximal tubules and involved in the uptake and disposition of cationic compounds from the blood by hepatic and renal clearance. Most likely functions as an uptake carrier in enterocytes contributing to the intestinal elimination of organic cations from the systemic circulation. Transports endogenous monoamines such as N-1-methylnicotinamide (NMN), guanidine, neurotransmitters dopamine, serotonin, noradrenaline, adrenaline and histamine, and quaternary ammonium compound such as choline. Also transports natural polyamines such as spermidine, agmatine and putrescine at low affinity, but relatively high turnover. Involved in the hepatic and intestinal uptake of the vitamin B1/thiamine, hence regulating hepatic lipid and energy metabolism. Contributes to the influx and efflux of fatty acid carriers carnitines and acylcarnitines across the basolateral membrane of hepatocytes, from the liver to the systemic circulation and inversely and may be involved in regulating the systemic availability of hepatic acylcarnitines. Also capable of transporting non-amine endogenous compounds such as prostaglandin E2 (PGE2) and prostaglandin F2-alpha (PGF2-alpha). May contribute to the transport of cationic compounds in testes across the blood-testis-barrier. Also mediates the uptake of xenobiotics tributylmethylammonium (TBuMA), quinidine, N-methyl-quinine (NMQ), N-methyl-quinidine (NMQD) N-(4,4-azo-n-pentyl)-quinuclidine (APQ), azidoprocainamide methoiodide (AMP), N-(4,4-azo-n-pentyl)-21-deoxyajmalinium (APDA) and 4-(4-(dimethylamino)styryl)-N-methylpyridinium (ASP). This Sus scrofa (Pig) protein is Solute carrier family 22 member 1 (SLC22A1).